The following is a 284-amino-acid chain: Bifunctional protein FolD (284 aa).

Residues 164 to 166 (GRS) and serine 189 each bind NADP(+).

The protein belongs to the tetrahydrofolate dehydrogenase/cyclohydrolase family. As to quaternary structure, homodimer.

It catalyses the reaction (6R)-5,10-methylene-5,6,7,8-tetrahydrofolate + NADP(+) = (6R)-5,10-methenyltetrahydrofolate + NADPH. The enzyme catalyses (6R)-5,10-methenyltetrahydrofolate + H2O = (6R)-10-formyltetrahydrofolate + H(+). Its pathway is one-carbon metabolism; tetrahydrofolate interconversion. Its function is as follows. Catalyzes the oxidation of 5,10-methylenetetrahydrofolate to 5,10-methenyltetrahydrofolate and then the hydrolysis of 5,10-methenyltetrahydrofolate to 10-formyltetrahydrofolate. The polypeptide is Bifunctional protein FolD (Listeria innocua serovar 6a (strain ATCC BAA-680 / CLIP 11262)).